A 154-amino-acid chain; its full sequence is UPF0756 membrane protein BPUM_2558 (154 aa).

The next 4 membrane-spanning stretches (helical) occupy residues Phe8–Val28, Trp54–Phe74, Trp87–Leu107, and Leu117–Ile137.

Belongs to the UPF0756 family.

It localises to the cell membrane. The sequence is that of UPF0756 membrane protein BPUM_2558 from Bacillus pumilus (strain SAFR-032).